Reading from the N-terminus, the 588-residue chain is Calcium/calmodulin-dependent protein kinase kinase 2 (588 aa).

Residues 1–14 (MSSCVSSQPSSNRA) are compositionally biased toward polar residues. 2 disordered regions span residues 1–33 (MSSCVSSQPSSNRAAPQDELGGRGSSSSESQKP) and 78–100 (GQEVPLDTSGSQARPHLSGRKLS). Ser-2 bears the N-acetylserine mark. A phosphoserine mark is found at Ser-100, Ser-114, Ser-129, Ser-133, and Ser-137. Over residues 128–139 (YSPVSSPQSSPR) the composition is skewed to low complexity. The interval 128 to 149 (YSPVSSPQSSPRLPRRPTVESH) is disordered. The 282-residue stretch at 165-446 (YTLKDEIGKG…VPEIKLHPWV (282 aa)) folds into the Protein kinase domain. ATP is bound by residues 171 to 179 (IGKGSYGVV) and Lys-194. The segment at 204–226 (QAGFPRRPPPRGTRPAPGGCIQP) is RP domain. The segment at 205 to 225 (AGFPRRPPPRGTRPAPGGCIQ) is disordered. Asp-312 serves as the catalytic Proton acceptor. The interval 472–477 (ENSVKH) is autoinhibitory domain. Residues 475-500 (VKHIPSLATVILVKTMIRKRSFGNPF) are calmodulin-binding. A phosphoserine mark is found at Pro-479, Ser-495, Ser-511, Thr-522, and Ser-572. Residues 497 to 588 (GNPFEGSRRE…LRPEEAMEPE (92 aa)) form a disordered region. Positions 521–536 (PTRECESLSELKEARQ) are enriched in basic and acidic residues. Residues 579-588 (LRPEEAMEPE) show a composition bias toward basic and acidic residues.

The protein belongs to the protein kinase superfamily. Ser/Thr protein kinase family. As to quaternary structure, interacts with calmodulin. Autophosphorylated and phosphorylated by PKA. Each isoform may show a different pattern of phosphorylation. As to expression, ubiquitously expressed with higher levels in the brain. Intermediate levels are detected in spleen, prostate, thyroid and leukocytes. The lowest level is in lung.

The protein resides in the nucleus. Its subcellular location is the cytoplasm. It localises to the cell projection. It is found in the neuron projection. The enzyme catalyses L-seryl-[protein] + ATP = O-phospho-L-seryl-[protein] + ADP + H(+). It catalyses the reaction L-threonyl-[protein] + ATP = O-phospho-L-threonyl-[protein] + ADP + H(+). Activated by Ca(2+)/calmodulin. Binding of calmodulin may relieve intrasteric autoinhibition. Autophosphorylation does not alter activity or regulation by Ca(2+)/calmodulin. In part, activity is independent on Ca(2+)/calmodulin. In terms of biological role, calcium/calmodulin-dependent protein kinase belonging to a proposed calcium-triggered signaling cascade involved in a number of cellular processes. Isoform 1, isoform 2 and isoform 3 phosphorylate CAMK1 and CAMK4. Isoform 3 phosphorylates CAMK1D. Isoform 4, isoform 5 and isoform 6 lacking part of the calmodulin-binding domain are inactive. Efficiently phosphorylates 5'-AMP-activated protein kinase (AMPK) trimer, including that consisting of PRKAA1, PRKAB1 and PRKAG1. This phosphorylation is stimulated in response to Ca(2+) signals. Seems to be involved in hippocampal activation of CREB1. May play a role in neurite growth. Isoform 3 may promote neurite elongation, while isoform 1 may promoter neurite branching. This is Calcium/calmodulin-dependent protein kinase kinase 2 (CAMKK2) from Homo sapiens (Human).